The sequence spans 612 residues: FAD-linked oxidoreductase notD' (612 aa).

The signal sequence occupies residues 1–19 (MRDIRELLLVLFTSCLALG). Asn50, Asn86, and Asn109 each carry an N-linked (GlcNAc...) asparagine glycan. The 184-residue stretch at 124 to 307 (GQGRIPRYSA…TSITMPVFGA (184 aa)) folds into the FAD-binding PCMH-type domain. Residues Asn311 and Asn396 are each glycosylated (N-linked (GlcNAc...) asparagine).

This sequence belongs to the oxygen-dependent FAD-linked oxidoreductase family. It depends on FAD as a cofactor.

It functions in the pathway alkaloid biosynthesis. In terms of biological role, FAD-linked oxidoreductase; part of the gene cluster that mediates the biosynthesis of notoamide, a fungal indole alkaloid that belongs to a family of natural products containing a characteristic bicyclo[2.2.2]diazaoctane core. The first step of notoamide biosynthesis involves coupling of L-proline and L-tryptophan by the bimodular NRPS notE', to produce cyclo-L-tryptophan-L-proline called brevianamide F. The reverse prenyltransferase notF' then acts as a deoxybrevianamide E synthase and converts brevianamide F to deoxybrevianamide E via reverse prenylation at C-2 of the indole ring leading to the bicyclo[2.2.2]diazaoctane core. Deoxybrevianamide E is further hydroxylated at C-6 of the indole ring, likely catalyzed by the cytochrome P450 monooxygenase notG', to yield 6-hydroxy-deoxybrevianamide E. 6-hydroxy-deoxybrevianamide E is a specific substrate of the prenyltransferase notC' for normal prenylation at C-7 to produce 6-hydroxy-7-prenyl-deoxybrevianamide, also called notoamide S. As the proposed pivotal branching point in notoamide biosynthesis, notoamide S can be diverted to notoamide E through an oxidative pyran ring closure putatively catalyzed by either notH' cytochrome P450 monooxygenase or the notD' FAD-linked oxidoreductase. This step would be followed by an indole 2,3-epoxidation-initiated pinacol-like rearrangement catalyzed by the notB' FAD-dependent monooxygenase leading to the formation of notoamide C and notoamide D. On the other hand notoamide S is converted to notoamide T by notH' (or notD'), a bifunctional oxidase that also functions as the intramolecular Diels-Alderase responsible for generation of (-)-notoamide T. To generate antipodal (+)-notoaminide T, notH (or notD) in Aspergillus strain MF297-2 is expected to catalyze a Diels-Alder reaction leading to the opposite stereochemistry. The remaining oxidoreductase notD' (or notH') likely catalyzes the oxidative pyran ring formation to yield (-)-stephacidin A. The FAD-dependent monooxygenase notI' is highly similar to notB' and is predicted to catalyze a similar conversion from (-)-stephacidin A to (+)-notoamide B via the 2,3-epoxidation of (-)-stephacidin A followed by a pinacol-type rearrangement. Finally, it remains unclear which enzyme could be responsible for the final hydroxylation steps leading to notoamide A and sclerotiamide. The polypeptide is FAD-linked oxidoreductase notD' (Aspergillus versicolor).